Consider the following 673-residue polypeptide: ATP-dependent zinc metalloprotease FtsH (673 aa).

Over 1–7 the chain is Cytoplasmic; sequence MNGFFKN. The chain crosses the membrane as a helical span at residues 8 to 28; the sequence is LSLWLVIGLLMVMLFNLFNSP. Residues 29-100 are Periplasmic-facing; it reads QGPGQSITFS…DVREPEGTPM (72 aa). The helical transmembrane segment at 101 to 121 threads the bilayer; that stretch reads LMQILISWFPMLLLIAVWIYF. Residues 122-673 are Cytoplasmic-facing; it reads MRQMQSGGGR…DTPEGDDKDR (552 aa). 194–201 is a binding site for ATP; the sequence is GPPGTGKT. Residue His416 coordinates Zn(2+). Residue Glu417 is part of the active site. Zn(2+) is bound by residues His420 and Asp492. Positions 601 to 673 are disordered; the sequence is ALKPLKKKDE…DTPEGDDKDR (73 aa). Over residues 648-660 the composition is skewed to polar residues; that stretch reads STRTATEASTQEV. Residues 661-673 are compositionally biased toward basic and acidic residues; the sequence is VSKDTPEGDDKDR.

This sequence in the central section; belongs to the AAA ATPase family. In the C-terminal section; belongs to the peptidase M41 family. Homohexamer. Zn(2+) is required as a cofactor.

Its subcellular location is the cell inner membrane. Functionally, acts as a processive, ATP-dependent zinc metallopeptidase for both cytoplasmic and membrane proteins. Plays a role in the quality control of integral membrane proteins. The chain is ATP-dependent zinc metalloprotease FtsH from Magnetococcus marinus (strain ATCC BAA-1437 / JCM 17883 / MC-1).